The sequence spans 273 residues: Ribosomal RNA small subunit methyltransferase A (273 aa).

S-adenosyl-L-methionine is bound by residues N19, L21, G46, E71, D94, and N117.

Belongs to the class I-like SAM-binding methyltransferase superfamily. rRNA adenine N(6)-methyltransferase family. RsmA subfamily.

It localises to the cytoplasm. The catalysed reaction is adenosine(1518)/adenosine(1519) in 16S rRNA + 4 S-adenosyl-L-methionine = N(6)-dimethyladenosine(1518)/N(6)-dimethyladenosine(1519) in 16S rRNA + 4 S-adenosyl-L-homocysteine + 4 H(+). Specifically dimethylates two adjacent adenosines (A1518 and A1519) in the loop of a conserved hairpin near the 3'-end of 16S rRNA in the 30S particle. May play a critical role in biogenesis of 30S subunits. The sequence is that of Ribosomal RNA small subunit methyltransferase A from Burkholderia ambifaria (strain MC40-6).